The primary structure comprises 224 residues: Phosphoribosylformylglycinamidine synthase subunit PurQ (224 aa).

A Glutamine amidotransferase type-1 domain is found at 2–224 (TVAVVRFGGS…DGQGILGAFA (223 aa)). Cys-85 acts as the Nucleophile in catalysis. Residues His-202 and Glu-204 contribute to the active site.

Part of the FGAM synthase complex composed of 1 PurL, 1 PurQ and 2 PurS subunits.

Its subcellular location is the cytoplasm. It carries out the reaction N(2)-formyl-N(1)-(5-phospho-beta-D-ribosyl)glycinamide + L-glutamine + ATP + H2O = 2-formamido-N(1)-(5-O-phospho-beta-D-ribosyl)acetamidine + L-glutamate + ADP + phosphate + H(+). The catalysed reaction is L-glutamine + H2O = L-glutamate + NH4(+). The protein operates within purine metabolism; IMP biosynthesis via de novo pathway; 5-amino-1-(5-phospho-D-ribosyl)imidazole from N(2)-formyl-N(1)-(5-phospho-D-ribosyl)glycinamide: step 1/2. Its function is as follows. Part of the phosphoribosylformylglycinamidine synthase complex involved in the purines biosynthetic pathway. Catalyzes the ATP-dependent conversion of formylglycinamide ribonucleotide (FGAR) and glutamine to yield formylglycinamidine ribonucleotide (FGAM) and glutamate. The FGAM synthase complex is composed of three subunits. PurQ produces an ammonia molecule by converting glutamine to glutamate. PurL transfers the ammonia molecule to FGAR to form FGAM in an ATP-dependent manner. PurS interacts with PurQ and PurL and is thought to assist in the transfer of the ammonia molecule from PurQ to PurL. In Halobacterium salinarum (strain ATCC 700922 / JCM 11081 / NRC-1) (Halobacterium halobium), this protein is Phosphoribosylformylglycinamidine synthase subunit PurQ.